A 434-amino-acid chain; its full sequence is Probable G-protein coupled receptor 150 (434 aa).

The Extracellular segment spans residues 1–3 (MED). A helical membrane pass occupies residues 4 to 24 (LFSPSILPPAPNISVPILLGW). Over 25-43 (GLNLTLGQGAPASGPPSRR) the chain is Cytoplasmic. A helical membrane pass occupies residues 44–64 (VRLVFLGVILVVAVAGNTTVL). The Extracellular portion of the chain corresponds to 65–81 (CRLCGGGGPWAGPKRRK). A helical membrane pass occupies residues 82-102 (MDFLLVQLALADLYACGGTAL). Residues 103–162 (SQLAWELLGEPRAATGDLACRFLQLLQASGRGASAHLVVLIALERRRAVRLPHGRPLPAR) are Cytoplasmic-facing. Residues 163-183 (ALAALGWLLALLLALPPAFVV) form a helical membrane-spanning segment. Over 184 to 237 (RGDSPSPLPPPPPPTSLQPGAPPAARAWPGERRCHGIFAPLPRWHLQVYAFYEA) the chain is Extracellular. Positions 188–210 (PSPLPPPPPPTSLQPGAPPAARA) are disordered. Positions 189 to 205 (SPLPPPPPPTSLQPGAP) are enriched in pro residues. The chain crosses the membrane as a helical span at residues 238–258 (VAGFVAPVTVLGVACGHLLSV). The Cytoplasmic segment spans residues 259–293 (WWRHRPQAPAAAAPWSASPGRAPAPSALPRAKVQS). Residues 294-314 (LKMSLLLALLFVGCELPYFAA) traverse the membrane as a helical segment. The Extracellular portion of the chain corresponds to 315–334 (RLAAAWSSGPAGDWEGEGLS). Residues 335–355 (AALRVVAMANSALNPFVYLFF) traverse the membrane as a helical segment. Residues 356–434 (QAGDCRLRRQ…PLPCSCESAF (79 aa)) lie on the Cytoplasmic side of the membrane. The span at 398 to 407 (WPHPHYHHAR) shows a compositional bias: basic residues. Positions 398–434 (WPHPHYHHARREPLDEGGLRPPPPRPRPLPCSCESAF) are disordered. Over residues 417–426 (RPPPPRPRPL) the composition is skewed to pro residues.

Belongs to the G-protein coupled receptor 1 family.

The protein localises to the cell membrane. Orphan receptor. This Homo sapiens (Human) protein is Probable G-protein coupled receptor 150 (GPR150).